The primary structure comprises 207 residues: Imidazole glycerol phosphate synthase subunit HisH (207 aa).

The Glutamine amidotransferase type-1 domain occupies 1 to 206; the sequence is MMIVIDYDAG…KEYVYENTAR (206 aa). Cys79 serves as the catalytic Nucleophile. Active-site residues include His181 and Glu183.

Heterodimer of HisH and HisF.

Its subcellular location is the cytoplasm. The catalysed reaction is 5-[(5-phospho-1-deoxy-D-ribulos-1-ylimino)methylamino]-1-(5-phospho-beta-D-ribosyl)imidazole-4-carboxamide + L-glutamine = D-erythro-1-(imidazol-4-yl)glycerol 3-phosphate + 5-amino-1-(5-phospho-beta-D-ribosyl)imidazole-4-carboxamide + L-glutamate + H(+). It catalyses the reaction L-glutamine + H2O = L-glutamate + NH4(+). Its pathway is amino-acid biosynthesis; L-histidine biosynthesis; L-histidine from 5-phospho-alpha-D-ribose 1-diphosphate: step 5/9. Its function is as follows. IGPS catalyzes the conversion of PRFAR and glutamine to IGP, AICAR and glutamate. The HisH subunit catalyzes the hydrolysis of glutamine to glutamate and ammonia as part of the synthesis of IGP and AICAR. The resulting ammonia molecule is channeled to the active site of HisF. The chain is Imidazole glycerol phosphate synthase subunit HisH from Streptococcus sanguinis (strain SK36).